The primary structure comprises 376 residues: MSFTFNWPRFSDQFHYDAMQMLNTALNKGNKPPIIADKIEVVELEMGTQPPELEIRDIGDLTVDQFRGIFRLTYAGDAHLVLKTKVQANPLNHKQPDIHLMVGSGGMLAAKQPLVVPMLLRLSHFRLSSYVVLVVSKQKGITLVFKTDPLQNVDINSTFDSIAVIQKFIQREIEGQLRQMFREDLPGIIHRLSQQWVKAKVEAPYLSKHPPPPIPPEEISEPGDYGEEGEFPFGSPPNHHSLDPDPKIVLRPSLNNASIHQLSTLSHSNHTLSPYTRSLSHFTVRSVPPRGIGPSGLSASFERQPVKAKRKRTYRLGGRKPPPESVPAVPDSPERASSPIPPSEFDESDMDRYFRSYDDHSRPPNIRQYRSHLHPS.

The SMP-LTD domain occupies 1-194 (MSFTFNWPRF…LPGIIHRLSQ (194 aa)). 2 disordered regions span residues 207–249 (SKHP…PKIV) and 286–376 (SVPP…LHPS). Over residues 218-230 (EISEPGDYGEEGE) the composition is skewed to acidic residues. The segment covering 306 to 318 (VKAKRKRTYRLGG) has biased composition (basic residues). Positions 350–362 (MDRYFRSYDDHSR) are enriched in basic and acidic residues.

It belongs to the MDM34 family. In terms of assembly, component of the ER-mitochondria encounter structure (ERMES) or MDM complex, composed of MMM1, MDM10, MDM12 and MDM34.

It localises to the mitochondrion outer membrane. In terms of biological role, component of the ERMES/MDM complex, which serves as a molecular tether to connect the endoplasmic reticulum (ER) and mitochondria. Components of this complex are involved in the control of mitochondrial shape and protein biogenesis, and function in nonvesicular lipid trafficking between the ER and mitochondria. MDM34 is required for the interaction of the ER-resident membrane protein MMM1 and the outer mitochondrial membrane-resident beta-barrel protein MDM10. This chain is Mitochondrial distribution and morphology protein 34, found in Laccaria bicolor (strain S238N-H82 / ATCC MYA-4686) (Bicoloured deceiver).